We begin with the raw amino-acid sequence, 174 residues long: Myosin regulatory light chain sqh (174 aa).

At threonine 21 the chain carries Phosphothreonine. Serine 22 is subject to Phosphoserine. 2 EF-hand domains span residues 31 to 66 (AQIAEFKEAFNMIDQNRDGFVEKEDLHDMLASLGKN) and 100 to 135 (DPEDVIKNAFGCFDEENMGVLPEDRLRELLTTMGDR). 4 residues coordinate Ca(2+): aspartate 44, asparagine 46, aspartate 48, and aspartate 55.

Myosin is a hexamer of 2 heavy chains and 4 light chains. In terms of processing, phosphorylation plays a central role in myosin regulation.

Its function is as follows. Required for cytokinesis, could regulate contractile ring function. The polypeptide is Myosin regulatory light chain sqh (sqh) (Drosophila melanogaster (Fruit fly)).